The primary structure comprises 204 residues: Large ribosomal subunit protein uL22m (204 aa).

Residues 1–38 (MAAVILERLGALWVQNLRGKLALGILPQSHIHTSASLE) constitute a mitochondrion transit peptide.

It belongs to the universal ribosomal protein uL22 family. As to quaternary structure, component of the mitochondrial ribosome large subunit (39S) which comprises a 16S rRNA and about 50 distinct proteins.

The protein localises to the mitochondrion. This chain is Large ribosomal subunit protein uL22m (MRPL22), found in Bos taurus (Bovine).